The following is a 70-amino-acid chain: ATP synthase subunit c (70 aa).

A run of 2 helical transmembrane segments spans residues 3 to 23 (FIAA…GNGM) and 47 to 67 (FIGV…AFML).

It belongs to the ATPase C chain family. As to quaternary structure, F-type ATPases have 2 components, F(1) - the catalytic core - and F(0) - the membrane proton channel. F(1) has five subunits: alpha(3), beta(3), gamma(1), delta(1), epsilon(1). F(0) has three main subunits: a(1), b(2) and c(10-14). The alpha and beta chains form an alternating ring which encloses part of the gamma chain. F(1) is attached to F(0) by a central stalk formed by the gamma and epsilon chains, while a peripheral stalk is formed by the delta and b chains.

It localises to the cell membrane. In terms of biological role, f(1)F(0) ATP synthase produces ATP from ADP in the presence of a proton or sodium gradient. F-type ATPases consist of two structural domains, F(1) containing the extramembraneous catalytic core and F(0) containing the membrane proton channel, linked together by a central stalk and a peripheral stalk. During catalysis, ATP synthesis in the catalytic domain of F(1) is coupled via a rotary mechanism of the central stalk subunits to proton translocation. Functionally, key component of the F(0) channel; it plays a direct role in translocation across the membrane. A homomeric c-ring of between 10-14 subunits forms the central stalk rotor element with the F(1) delta and epsilon subunits. This chain is ATP synthase subunit c, found in Lacticaseibacillus casei (strain BL23) (Lactobacillus casei).